A 132-amino-acid polypeptide reads, in one-letter code: Small ribosomal subunit protein uS8 (132 aa).

Belongs to the universal ribosomal protein uS8 family. As to quaternary structure, part of the 30S ribosomal subunit. Contacts proteins S5 and S12.

Its function is as follows. One of the primary rRNA binding proteins, it binds directly to 16S rRNA central domain where it helps coordinate assembly of the platform of the 30S subunit. The protein is Small ribosomal subunit protein uS8 of Kocuria rhizophila (strain ATCC 9341 / DSM 348 / NBRC 103217 / DC2201).